We begin with the raw amino-acid sequence, 172 residues long: Photosystem I assembly protein Ycf3 (172 aa).

TPR repeat units lie at residues 35–70, 74–107, and 122–155; these read AFTYYRDGAIMLAQSEGNYAEALQNYYEATRLEIDP, SYILYNIGLIHTSNGEHTKALEYYFRALERNPFL, and GEQAILQGDSEIAEAWFDQAAEYWKQAIALTPGN.

This sequence belongs to the Ycf3 family.

The protein localises to the plastid. The protein resides in the chloroplast thylakoid membrane. In terms of biological role, essential for the assembly of the photosystem I (PSI) complex. May act as a chaperone-like factor to guide the assembly of the PSI subunits. The polypeptide is Photosystem I assembly protein Ycf3 (Sorghum bicolor (Sorghum)).